Consider the following 669-residue polypeptide: uncharacterized protein (669 aa).

6 consecutive transmembrane segments (helical) span residues Leu-39 to Trp-61, Ile-124 to Ile-146, Gly-153 to Gly-175, Gly-190 to Val-212, Phe-221 to Leu-243, and Ile-263 to Leu-285. RCK C-terminal domains lie at Ala-316–Gly-397 and Lys-398–Arg-483. The next 5 helical transmembrane spans lie at Pro-484–Phe-506, Ile-516–Ser-538, Ile-558–His-580, Ile-585–Ile-607, and Val-645–Leu-667.

It belongs to the AAE transporter (TC 2.A.81) family.

The protein localises to the cell membrane. This is an uncharacterized protein from Desulfotalea psychrophila (strain LSv54 / DSM 12343).